Reading from the N-terminus, the 126-residue chain is Aspartate 1-decarboxylase 2 (126 aa).

Serine 25 serves as the catalytic Schiff-base intermediate with substrate; via pyruvic acid. Serine 25 is subject to Pyruvic acid (Ser). Residue threonine 57 participates in substrate binding. Residue tyrosine 58 is the Proton donor of the active site. 73–75 contributes to the substrate binding site; it reads GSA.

Belongs to the PanD family. Heterooctamer of four alpha and four beta subunits. Requires pyruvate as cofactor. Post-translationally, is synthesized initially as an inactive proenzyme, which is activated by self-cleavage at a specific serine bond to produce a beta-subunit with a hydroxyl group at its C-terminus and an alpha-subunit with a pyruvoyl group at its N-terminus.

Its subcellular location is the cytoplasm. The enzyme catalyses L-aspartate + H(+) = beta-alanine + CO2. It participates in cofactor biosynthesis; (R)-pantothenate biosynthesis; beta-alanine from L-aspartate: step 1/1. Functionally, catalyzes the pyruvoyl-dependent decarboxylation of aspartate to produce beta-alanine. In Polaromonas sp. (strain JS666 / ATCC BAA-500), this protein is Aspartate 1-decarboxylase 2.